The chain runs to 164 residues: Peptidyl-prolyl cis-trans isomerase A (164 aa).

An N-acetylmethionine modification is found at Met1. Residue Val2 is modified to N-acetylvaline; in Peptidyl-prolyl cis-trans isomerase A, N-terminally processed. The region spanning 7–163 (FFDITADGEP…KKITISDCGQ (157 aa)) is the PPIase cyclophilin-type domain. Lys28 carries the N6-acetyllysine; alternate modification. A Glycyl lysine isopeptide (Lys-Gly) (interchain with G-Cter in SUMO2); alternate cross-link involves residue Lys28. A Glycyl lysine isopeptide (Lys-Gly) (interchain with G-Cter in ubiquitin); alternate cross-link involves residue Lys28. Residues Lys44 and Lys76 each carry the N6-acetyllysine modification. Ser77 is modified (phosphoserine). Lys82 bears the N6-acetyllysine; alternate mark. Lys82 is covalently cross-linked (Glycyl lysine isopeptide (Lys-Gly) (interchain with G-Cter in SUMO2); alternate). Thr93 carries the post-translational modification Phosphothreonine. Residue Asn108 is glycosylated (N-linked (GlcNAc...) asparagine). Lys125, Lys131, and Lys133 each carry N6-acetyllysine.

The protein belongs to the cyclophilin-type PPIase family. PPIase A subfamily. As to quaternary structure, interacts with protein phosphatase PPP3CA/calcineurin A. Interacts with isoform 2 of BSG/CD147. Interacts with FOXO1; the interaction promotes FOXO1 dephosphorylation, nuclear accumulation and transcriptional activity. Interacts with integrin ITGA2B:ITGB3; the interaction is ROS and peptidyl-prolyl cis-trans isomerase (PPIase) activity-dependent and is increased in the presence of thrombin. Interacts with MAP3K5. Interacts with TARDBP; the interaction is dependent on the RNA-binding activity of TARDBP and the PPIase activity of PPIA/CYPA and the acetylation of PPIA/CYPA at Lys-125 favors the interaction. Interacts with HNRNPA1, HNRNPA2B1, HNRNPC, RBMX, HNRNPK and HNRNPM. Acetylation at Lys-125 markedly inhibits catalysis of cis to trans isomerization. PPIA acetylation also antagonizes the immunosuppressive effects of cyclosporine by inhibiting the sequential steps of cyclosporine binding and calcineurin inhibition. Acetylation at Lys-125 favors the interaction with TARDBP.

The protein resides in the cytoplasm. It localises to the secreted. The protein localises to the nucleus. It catalyses the reaction [protein]-peptidylproline (omega=180) = [protein]-peptidylproline (omega=0). Binds cyclosporin A (CsA). CsA mediates some of its effects via an inhibitory action on PPIase. In terms of biological role, catalyzes the cis-trans isomerization of proline imidic peptide bonds in oligopeptides. Exerts a strong chemotactic effect on leukocytes partly through activation of one of its membrane receptors BSG/CD147, initiating a signaling cascade that culminates in MAPK/ERK activation. Activates endothelial cells (ECs) in a proinflammatory manner by stimulating activation of NF-kappa-B and ERK, JNK and p38 MAP-kinases and by inducing expression of adhesion molecules including SELE and VCAM1. Induces apoptosis in ECs by promoting the FOXO1-dependent expression of CCL2 and BCL2L11 which are involved in EC chemotaxis and apoptosis. In response to oxidative stress, initiates proapoptotic and antiapoptotic signaling in ECs via activation of NF-kappa-B and AKT1 and up-regulation of antiapoptotic protein BCL2. Negatively regulates MAP3K5/ASK1 kinase activity, autophosphorylation and oxidative stress-induced apoptosis mediated by MAP3K5/ASK1. Necessary for the assembly of TARDBP in heterogeneous nuclear ribonucleoprotein (hnRNP) complexes and regulates TARDBP binding to RNA UG repeats and TARDBP-dependent expression of HDAC6, ATG7 and VCP which are involved in clearance of protein aggregates. Plays an important role in platelet activation and aggregation. Regulates calcium mobilization and integrin ITGA2B:ITGB3 bidirectional signaling via increased ROS production as well as by facilitating the interaction between integrin and the cell cytoskeleton. Binds heparan sulfate glycosaminoglycans. The sequence is that of Peptidyl-prolyl cis-trans isomerase A (Ppia) from Rattus norvegicus (Rat).